The sequence spans 1059 residues: Isoleucine--tRNA ligase (1059 aa).

Positions 47–57 (PYTTGHIHLGT) match the 'HIGH' region motif. The short motif at 591–595 (KMSKS) is the 'KMSKS' region element. Lys-594 serves as a coordination point for ATP.

This sequence belongs to the class-I aminoacyl-tRNA synthetase family. IleS type 2 subfamily. In terms of assembly, monomer. It depends on Zn(2+) as a cofactor.

The protein localises to the cytoplasm. It catalyses the reaction tRNA(Ile) + L-isoleucine + ATP = L-isoleucyl-tRNA(Ile) + AMP + diphosphate. Catalyzes the attachment of isoleucine to tRNA(Ile). As IleRS can inadvertently accommodate and process structurally similar amino acids such as valine, to avoid such errors it has two additional distinct tRNA(Ile)-dependent editing activities. One activity is designated as 'pretransfer' editing and involves the hydrolysis of activated Val-AMP. The other activity is designated 'posttransfer' editing and involves deacylation of mischarged Val-tRNA(Ile). In Methanoculleus marisnigri (strain ATCC 35101 / DSM 1498 / JR1), this protein is Isoleucine--tRNA ligase.